The following is a 274-amino-acid chain: HTH-type transcriptional regulator GadX (274 aa).

The 98-residue stretch at 145–242 folds into the HTH araC/xylS-type domain; the sequence is TRVCTVINNN…GMTPTEYQER (98 aa). 2 consecutive DNA-binding regions (H-T-H motif) follow at residues 162 to 183 and 209 to 232; these read ARIASELLMSPSLLKKKLREEG and IKRVAVSCGYHSVSYFIYVFRNYY.

In terms of assembly, homodimer.

Functionally, positively regulates the expression of about fifteen genes involved in acid resistance such as gadA, gadB and gadC. Depending on the conditions (growth phase and medium), can repress gadW. Negatively regulates perA expression in acidic conditions and positively regulates it in alkaline conditions. The protein is HTH-type transcriptional regulator GadX (gadX) of Escherichia coli O127:H6 (strain E2348/69 / EPEC).